The sequence spans 997 residues: P3N-PIPO polyprotein (997 aa).

The Peptidase S30 domain maps to 173 to 313; it reads IVCVDDVNNL…VLFYSDVEHY (141 aa). Residues Glu-235 and Ser-267 each act as for P1 proteinase activity in the active site. An Involved in interaction with stylet and aphid transmission motif is present at residues 365–368; the sequence is KLSC. The short motif at 621 to 623 is the Involved in virions binding and aphid transmission element; sequence PTK. The Peptidase C6 domain occupies 647 to 769; sequence MYIAKEGYCY…QSEMKHYRVG (123 aa). Residues Cys-655 and His-728 each act as for helper component proteinase activity in the active site.

Belongs to the potyviridae P3N-PIPO polyprotein family. In terms of assembly, interacts (via PIPO domain) with host PCaP1 protein; this interaction may help to anchor the movement complex to the plasma membrane from which the complex could move to the plasmodesmata. In terms of processing, potyviral RNA is expressed as two polyproteins which undergo post-translational proteolytic processing. Genome polyprotein is processed by NIa-pro, P1 and HC-pro proteinases resulting in the production of at least ten individual proteins. P3N-PIPO is cleaved by P1 and HC-pro proteinases resulting in the production of three individual proteins. The P1 proteinase and the HC-pro cleave only their respective C-termini autocatalytically.

Its subcellular location is the host cell junction. The protein localises to the host plasmodesma. It catalyses the reaction Hydrolyzes a Gly-|-Gly bond at its own C-terminus, commonly in the sequence -Tyr-Xaa-Val-Gly-|-Gly, in the processing of the potyviral polyprotein.. In terms of biological role, required for aphid transmission and also has proteolytic activity. Only cleaves a Gly-Gly dipeptide at its own C-terminus. Interacts with virions and aphid stylets. Acts as a suppressor of RNA-mediated gene silencing, also known as post-transcriptional gene silencing (PTGS), a mechanism of plant viral defense that limits the accumulation of viral RNAs. May have RNA-binding activity. Functionally, allows efficient cell to cell propagation, by bypassing the host cell wall barrier. Transports viral genome to neighboring plant cells directly through plasmosdesmata, without any budding. The protein is P3N-PIPO polyprotein of Citrullus lanatus (Watermelon).